The primary structure comprises 373 residues: UDP-sugar transporter UST74c (373 aa).

Residues 27–49 (LEEKMGGSADRSSLLDGSGSKEL) are disordered. Position 50 is a phosphoserine (S50). 8 consecutive transmembrane segments (helical) span residues 89–111 (HFPS…LGMG), 131–153 (FPLP…TLSL), 174–196 (ILGL…GALL), 206–225 (MRGY…NGVY), 238–260 (YGLM…YVTG), 275–297 (VFVV…TILC), 302–324 (SALT…GMFI), and 329–351 (VFSW…YTYV).

This sequence belongs to the TPT transporter family. SLC35D subfamily.

It localises to the golgi apparatus membrane. Functionally, involved in the import of UDP-sugars from the cytoplasm into the Golgi lumen. This chain is UDP-sugar transporter UST74c (frc), found in Drosophila melanogaster (Fruit fly).